A 408-amino-acid polypeptide reads, in one-letter code: Peptidoglycan muramidase Tse3 (408 aa).

9 residues coordinate Ca(2+): Asn181, Asp253, Gln254, Glu258, Glu375, Ser378, Arg379, Asp382, and Asn384.

Forms a heterotetramer with Tsi3 consisting of two Tse3 dimers and two Tsi3 dimers. Formation of the complex inactivates Tse3 enzymatic activity. The cofactor is Ca(2+).

Its subcellular location is the host membrane. The protein localises to the secreted. The catalysed reaction is Hydrolysis of (1-&gt;4)-beta-linkages between N-acetylmuramic acid and N-acetyl-D-glucosamine residues in a peptidoglycan and between N-acetyl-D-glucosamine residues in chitodextrins.. Its activity is regulated as follows. Enzymatic activity depends on membrane binding. Toxin secreted by the H1 type VI (H1-T6SS) secretion system into the periplasm of recipient cells. Degrades peptidoglycan via muramidase activity thereby helping itself to compete with other bacteria. To protect itself, the bacterium synthesizes immunity protein Tsi3 that specifically interacts with and inactivates cognate toxin. This Pseudomonas aeruginosa (strain ATCC 15692 / DSM 22644 / CIP 104116 / JCM 14847 / LMG 12228 / 1C / PRS 101 / PAO1) protein is Peptidoglycan muramidase Tse3.